Here is a 533-residue protein sequence, read N- to C-terminus: MPMTMSQAFIGNFLGNSPKWYKIAILSFLIINPILFFYVSPFVAGWVLVLEFIFTLAMALKCYPLQPGGLLAIEAVAIGMTSASQVLHEIEANLEVLLLLVFMVAGIYFMKQLLLFVFTKMITKVRSKILVSLLFCLASAFLSAFLDALTVIAVIITVAVGFYSIYHKVASGKDFSADHDHTSEGKNDDGENQLNEDELESFRGFLRNLLMHAGVGTALGGVCTMVGEPQNLIIAAQANWQFGEFAIRMSPVTVPVLFAGILTCFIVEKFRWFGYGAQLPDAVHKILCDYAAYEDARRTNKDKMKLVIQAFVGVWLIAGLALHLASVGLIGLSVIILTTAFNGITDEHALGKAFEEALPFTALLAVFFAVVAVIIDQQLFGPVIQWALNHEGNTQLVIFYIANGLLSMVSDNVFVGTVYINEVKAALINGQITRDQFDLLAVAINTGTNLPSVATPNGQAAFLFLLTSALAPLIRLSYGRMVWMALPYTIVLSIVGVMAIQSGFLEQMTQYFYDSHAILHHSVKEALAPAAAH.

Transmembrane regions (helical) follow at residues 10–30 (IGNF…SFLI), 67–87 (PGGL…SQVL), 98–118 (LLLV…LFVF), 131–165 (VSLL…FYSI), 209–229 (LLMH…VGEP), 247–267 (IRMS…CFIV), 310–330 (AFVG…VGLI), 355–375 (EEAL…AVII), 396–416 (LVIF…VFVG), 454–474 (ATPN…APLI), and 481–501 (MVWM…MAIQ).

The protein belongs to the NhaB Na(+)/H(+) (TC 2.A.34) antiporter family.

It is found in the cell inner membrane. It carries out the reaction 2 Na(+)(in) + 3 H(+)(out) = 2 Na(+)(out) + 3 H(+)(in). Functionally, na(+)/H(+) antiporter that extrudes sodium in exchange for external protons. The sequence is that of Na(+)/H(+) antiporter NhaB from Shewanella sp. (strain ANA-3).